The sequence spans 311 residues: Cell division protein ZipA (311 aa).

Residues 1 to 6 (MENLQL) are Periplasmic-facing. The helical transmembrane segment at 7–27 (VLFVLGAIAIIAVLVHGFWSI) threads the bilayer. The Cytoplasmic segment spans residues 28-311 (RKQQPKSLKE…YLQRIRAQLD (284 aa)). Residues 46 to 114 (DQASVRDSQG…FALSDEPVQR (69 aa)) are disordered. 2 stretches are compositionally biased toward basic and acidic residues: residues 62–83 (GEVR…DKPV) and 94–103 (RDVEDSRHEQ).

Belongs to the ZipA family. As to quaternary structure, interacts with FtsZ via their C-terminal domains.

It localises to the cell inner membrane. Functionally, essential cell division protein that stabilizes the FtsZ protofilaments by cross-linking them and that serves as a cytoplasmic membrane anchor for the Z ring. Also required for the recruitment to the septal ring of downstream cell division proteins. This is Cell division protein ZipA from Shewanella woodyi (strain ATCC 51908 / MS32).